The following is an 86-amino-acid chain: MLELIGRIDYRLGVGALIVALIIVIIVWTIAYIEYRKLVRQRRIDWLVKRIKERAEDSGNESGGDTEELETMVDMGHLRLLDGNDL.

The Extracellular portion of the chain corresponds to 1–12 (MLELIGRIDYRL). Residues 13 to 33 (GVGALIVALIIVIIVWTIAYI) traverse the membrane as a helical segment. Over 34–86 (EYRKLVRQRRIDWLVKRIKERAEDSGNESGGDTEELETMVDMGHLRLLDGNDL) the chain is Cytoplasmic. Phosphoserine; by host CK2 occurs at positions 58 and 62.

The protein belongs to the HIV-1 VPU protein family. In terms of assembly, homopentamer. Interacts with host CD4 and BRTC; these interactions induce proteasomal degradation of CD4. Interacts with host BST2; this interaction leads to the degradation of host BST2. Interacts with host FBXW11. Interacts with host AP1M1; this interaction plays a role in the mistrafficking and subsequent degradation of host BST2. Interacts with host RANBP2; this interaction allows Vpu to down-regulate host BLM sumoylation. In terms of processing, phosphorylated by host CK2. This phosphorylation is necessary for interaction with human BTRC and degradation of CD4.

The protein resides in the host membrane. Ion channel activity is inhibited by hexamethylene amiloride in vitro. Its function is as follows. Enhances virion budding, by targeting human CD4 and Tetherin/BST2 to proteasome degradation. Degradation of CD4 prevents any unwanted premature interactions between viral Env and its host receptor CD4 in the endoplasmic reticulum. Degradation of antiretroviral protein Tetherin/BST2 is important for virion budding, as BST2 tethers new viral particles to the host cell membrane. Mechanistically, Vpu bridges either CD4 or BST2 to BTRC, a substrate recognition subunit of the Skp1/Cullin/F-box protein E3 ubiquitin ligase, induces their ubiquitination and subsequent proteasomal degradation. The alteration of the E3 ligase specificity by Vpu seems to promote the degradation of host IKBKB, leading to NF-kappa-B down-regulation and subsequent apoptosis. Acts as a viroporin that forms an oligomeric ion channel in membranes. Modulates the host DNA repair mechanisms to promote degradation of nuclear viral cDNA in cells that are already productively infected in order to suppress immune sensing and proviral hyper-integration (superinfection). Manipulates PML-NBs and modulates SUMOylation of host BLM protein thereby enhancing its DNA-end processing activity toward viral unintegrated linear DNA. Also inhibits RAD52-mediated homologous repair of viral cDNA, preventing the generation of dead-end circular forms of single copies of the long terminal repeat and permitting sustained nucleolytic attack. In Homo sapiens (Human), this protein is Protein Vpu.